Consider the following 193-residue polypeptide: Peptidyl-tRNA hydrolase (193 aa).

Residue tyrosine 14 participates in tRNA binding. Catalysis depends on histidine 19, which acts as the Proton acceptor. TRNA contacts are provided by phenylalanine 64, asparagine 66, and asparagine 112.

This sequence belongs to the PTH family. Monomer.

The protein resides in the cytoplasm. The catalysed reaction is an N-acyl-L-alpha-aminoacyl-tRNA + H2O = an N-acyl-L-amino acid + a tRNA + H(+). In terms of biological role, hydrolyzes ribosome-free peptidyl-tRNAs (with 1 or more amino acids incorporated), which drop off the ribosome during protein synthesis, or as a result of ribosome stalling. Its function is as follows. Catalyzes the release of premature peptidyl moieties from peptidyl-tRNA molecules trapped in stalled 50S ribosomal subunits, and thus maintains levels of free tRNAs and 50S ribosomes. This is Peptidyl-tRNA hydrolase from Bartonella henselae (strain ATCC 49882 / DSM 28221 / CCUG 30454 / Houston 1) (Rochalimaea henselae).